We begin with the raw amino-acid sequence, 303 residues long: Hemolysin C (303 aa).

2 CBS domains span residues 81-143 (MVPR…NSPL) and 146-203 (LIRK…IDDE).

Belongs to the UPF0053 family. Hemolysin C subfamily.

The sequence is that of Hemolysin C (tlyC) from Rickettsia prowazekii (strain Madrid E).